The chain runs to 273 residues: Shikimate dehydrogenase (NADP(+)) (273 aa).

Residues 15-17 and T62 each bind shikimate; that span reads SQS. K66 (proton acceptor) is an active-site residue. E78 contacts NADP(+). Positions 87 and 102 each coordinate shikimate. NADP(+)-binding positions include 127–131, 151–156, and M215; these read GAGGA and NRTVIK. Y217 is a binding site for shikimate. Residue G239 participates in NADP(+) binding.

Belongs to the shikimate dehydrogenase family. As to quaternary structure, homodimer.

The enzyme catalyses shikimate + NADP(+) = 3-dehydroshikimate + NADPH + H(+). It functions in the pathway metabolic intermediate biosynthesis; chorismate biosynthesis; chorismate from D-erythrose 4-phosphate and phosphoenolpyruvate: step 4/7. Involved in the biosynthesis of the chorismate, which leads to the biosynthesis of aromatic amino acids. Catalyzes the reversible NADPH linked reduction of 3-dehydroshikimate (DHSA) to yield shikimate (SA). This Chromobacterium violaceum (strain ATCC 12472 / DSM 30191 / JCM 1249 / CCUG 213 / NBRC 12614 / NCIMB 9131 / NCTC 9757 / MK) protein is Shikimate dehydrogenase (NADP(+)).